The primary structure comprises 167 residues: Secreted LysM effector Blys6 (167 aa).

Positions 1–16 (MKGLCVAACTLVLAAA) are cleaved as a signal peptide. The LysM domain occupies 109-162 (KWYRIRRGDDCGPVASEFGISADQLIEWNPWLSADVDGTHYPCMNIWPTDNLCV).

This sequence belongs to the secreted LysM effector family.

In terms of biological role, might have a role in sequestration of chitin oligosaccharides (breakdown products of fungal cell walls that are released during invasion and act as triggers of host immunity) to dampen host defense. In Beauveria bassiana (strain ARSEF 2860) (White muscardine disease fungus), this protein is Secreted LysM effector Blys6.